The following is a 944-amino-acid chain: UvrABC system protein A (944 aa).

An ABC transporter 1 domain is found at 1-242 (MSKVDFLHIK…GKGIVKVENV (242 aa)). 34–41 (GLSGSGKS) contacts ATP. The C4-type; degenerate zinc finger occupies 256–283 (CPKGDFEMPKIETRLFSFNSPYGMCQNC). ABC transporter domains are found at residues 359-597 (EEID…KYLS) and 610-935 (SGSG…EKSY). ATP is bound at residue 643–650 (GVSGSGKS). The segment at 744–770 (CEKCSGDGSIKIEMFFLPNVYITCDHC) adopts a C4-type zinc-finger fold.

This sequence belongs to the ABC transporter superfamily. UvrA family. As to quaternary structure, forms a heterotetramer with UvrB during the search for lesions.

Its subcellular location is the cytoplasm. In terms of biological role, the UvrABC repair system catalyzes the recognition and processing of DNA lesions. UvrA is an ATPase and a DNA-binding protein. A damage recognition complex composed of 2 UvrA and 2 UvrB subunits scans DNA for abnormalities. When the presence of a lesion has been verified by UvrB, the UvrA molecules dissociate. The polypeptide is UvrABC system protein A (Mycoplasmopsis pulmonis (strain UAB CTIP) (Mycoplasma pulmonis)).